The chain runs to 629 residues: tRNA uridine 5-carboxymethylaminomethyl modification enzyme MnmG (629 aa).

Residues 13–18 (GGGHAG), valine 125, and serine 180 contribute to the FAD site. 273–287 (GPRYCPSIEDKVMRF) contributes to the NAD(+) binding site. Position 370 (glutamine 370) interacts with FAD.

It belongs to the MnmG family. Homodimer. Heterotetramer of two MnmE and two MnmG subunits. Requires FAD as cofactor.

Its subcellular location is the cytoplasm. In terms of biological role, NAD-binding protein involved in the addition of a carboxymethylaminomethyl (cmnm) group at the wobble position (U34) of certain tRNAs, forming tRNA-cmnm(5)s(2)U34. This chain is tRNA uridine 5-carboxymethylaminomethyl modification enzyme MnmG, found in Psychromonas ingrahamii (strain DSM 17664 / CCUG 51855 / 37).